Here is a 228-residue protein sequence, read N- to C-terminus: 2-C-methyl-D-erythritol 4-phosphate cytidylyltransferase (228 aa).

The protein belongs to the IspD/TarI cytidylyltransferase family. IspD subfamily.

It catalyses the reaction 2-C-methyl-D-erythritol 4-phosphate + CTP + H(+) = 4-CDP-2-C-methyl-D-erythritol + diphosphate. It functions in the pathway isoprenoid biosynthesis; isopentenyl diphosphate biosynthesis via DXP pathway; isopentenyl diphosphate from 1-deoxy-D-xylulose 5-phosphate: step 2/6. Functionally, catalyzes the formation of 4-diphosphocytidyl-2-C-methyl-D-erythritol from CTP and 2-C-methyl-D-erythritol 4-phosphate (MEP). The protein is 2-C-methyl-D-erythritol 4-phosphate cytidylyltransferase of Dechloromonas aromatica (strain RCB).